The sequence spans 105 residues: uncharacterized protein (105 aa).

A disordered region spans residues 22-105 (GSAGHGATEA…KKRIIKGKVM (84 aa)). The span at 61 to 83 (HDSRPARGDARKRHCQENNKTDR) shows a compositional bias: basic and acidic residues. Residues 93 to 105 (NRRKKRIIKGKVM) are compositionally biased toward basic residues.

This is an uncharacterized protein from Escherichia coli (strain K12).